The sequence spans 159 residues: Endoribonuclease YbeY (159 aa).

Zn(2+) contacts are provided by histidine 123, histidine 127, and histidine 133.

Belongs to the endoribonuclease YbeY family. Zn(2+) is required as a cofactor.

The protein resides in the cytoplasm. Functionally, single strand-specific metallo-endoribonuclease involved in late-stage 70S ribosome quality control and in maturation of the 3' terminus of the 16S rRNA. This is Endoribonuclease YbeY from Bacillus pumilus (strain SAFR-032).